We begin with the raw amino-acid sequence, 310 residues long: Ribonuclease HIII (310 aa).

The RNase H type-2 domain maps to 90 to 306 (FQCIGSDEAG…RKKAENLVQK (217 aa)). Residues Asp-96, Glu-97, and Asp-201 each contribute to the a divalent metal cation site.

It belongs to the RNase HII family. RnhC subfamily. Mn(2+) serves as cofactor. Requires Mg(2+) as cofactor.

Its subcellular location is the cytoplasm. It catalyses the reaction Endonucleolytic cleavage to 5'-phosphomonoester.. Its function is as follows. Endonuclease that specifically degrades the RNA of RNA-DNA hybrids. The protein is Ribonuclease HIII of Staphylococcus saprophyticus subsp. saprophyticus (strain ATCC 15305 / DSM 20229 / NCIMB 8711 / NCTC 7292 / S-41).